A 1072-amino-acid chain; its full sequence is DNA-directed RNA polymerase subunit beta (1072 aa).

The protein belongs to the RNA polymerase beta chain family. In plastids the minimal PEP RNA polymerase catalytic core is composed of four subunits: alpha, beta, beta', and beta''. When a (nuclear-encoded) sigma factor is associated with the core the holoenzyme is formed, which can initiate transcription.

Its subcellular location is the plastid. The protein resides in the chloroplast. The catalysed reaction is RNA(n) + a ribonucleoside 5'-triphosphate = RNA(n+1) + diphosphate. DNA-dependent RNA polymerase catalyzes the transcription of DNA into RNA using the four ribonucleoside triphosphates as substrates. This Barbarea verna (Land cress) protein is DNA-directed RNA polymerase subunit beta.